The following is a 364-amino-acid chain: TD and POZ domain-containing protein 2 (364 aa).

Residues 19–149 (EFCYEWTISN…KDKLTLCCKV (131 aa)) form the MATH domain. Positions 188–255 (TDCSLLVAGH…IYTGKAPTLH (68 aa)) constitute a BTB domain.

It belongs to the Tdpoz family.

The chain is TD and POZ domain-containing protein 2 from Mus musculus (Mouse).